The sequence spans 115 residues: Large ribosomal subunit protein uL18 (115 aa).

Positions Met1–Pro29 are disordered. The span at Leu10–Gly20 shows a compositional bias: basic residues.

It belongs to the universal ribosomal protein uL18 family. In terms of assembly, part of the 50S ribosomal subunit; part of the 5S rRNA/L5/L18/L25 subcomplex. Contacts the 5S and 23S rRNAs.

In terms of biological role, this is one of the proteins that bind and probably mediate the attachment of the 5S RNA into the large ribosomal subunit, where it forms part of the central protuberance. The protein is Large ribosomal subunit protein uL18 of Lactococcus lactis subsp. lactis (strain IL1403) (Streptococcus lactis).